A 124-amino-acid chain; its full sequence is Competence protein ComGG (124 aa).

Residues 1-28 form the signal peptide; it reads MYRTRGFIYPAVLFVSALVLLIVNFVAA.

The transformation pili are flexible filaments, consisting mainly of the major pilin ComGC and smaller amounts of the minor pilins, including at least ComGD, ComGF and ComGG. Interacts with ComGC; the interaction is probably direct. Interacts with ComGD. Interacts with ComGF. May act as a link between ComGC, ComGD and ComGF. Homodimer; disulfide-linked. A minor fraction of ComGG is found as a disulfide-bonded homodimer. Partial processing of ComGG in competent cells requires ComC.

It localises to the cell membrane. It is found in the secreted. Its function is as follows. Required for formation of the type IV-like pilus (T4P) that plays a role in transformation. Transformation pili are dynamically extended and retracted, perhaps thereby promoting DNA uptake and transformation. Required for transformation and DNA binding. This Bacillus subtilis (strain 168) protein is Competence protein ComGG (comGG).